Here is a 506-residue protein sequence, read N- to C-terminus: Cytochrome P450 monooxygenase tpcB (506 aa).

Cys-450 contacts heme.

It belongs to the cytochrome P450 family. Requires heme as cofactor.

The protein operates within secondary metabolite biosynthesis; terpenoid biosynthesis. Its function is as follows. Cytochrome P450 monooxygenase; part of the gene cluster that mediates the biosynthesis of terpestacin. The bifunctional terpene synthase tpcA converts isopentenyl diphosphate (IPP) and dimethylallyl diphosphate (DMAPP) into the sesterterpene preterpestacin I. The C-terminal prenyltransferase (PT) domain of tpcA catalyzes formation of GFPP, whereas the N-terminal terpene cyclase (TC) domain catalyzes the cyclization of GFPP into preterpestacin I. The cytochrome P450 monooxygenase tpcB then hydroxylates preterpestacin I to yield 24-hydroxypreterpstacin I (renamed as preterpestacin II) whereas the cytochrome P450 monooxygenase tpcC further hydroxylates preterpestacin II to yield 16,17-dihydroxypreterpestacin II (renamed as preterpestacin III). Finally, the FAD-dependent monooxygenase tpcD converts preterpestacin III into terpestacin. This is Cytochrome P450 monooxygenase tpcB from Cochliobolus heterostrophus (strain C5 / ATCC 48332 / race O) (Southern corn leaf blight fungus).